The chain runs to 342 residues: MSQRIFLPDTLANWQWPRHLNPHYAEVKKASAAWAQSFRAFQTKAQEAFDRCDFNLLASFAYPLADEGDGCDLMNLFFVIDEYSDVSTEEEVRAQKDIVMDAIRNTEKPRPAGEWIGGEVARQFWDLAKKTASSQAQKRFIDTFDEYLESVVQQAADRNNSHIRGIESYLEVRRCTIGAKPSFALLEFDMQLPDEVINHPVIKELEKSCIDMLCLGNDVVSYNLEQARDDDGHNIVTIAMNELRTDVAGAMIWVDEYHKQLESRFMENFKKVPRWGGPIDLQVARYCDGLGNWVRANDQWSFESERYFGKKGPEIIQRRWITLMPKMVSEELGPQIVDGSHL.

Residues Asp-81, Asn-217, Ser-221, and Glu-225 each contribute to the Mg(2+) site. A DDXXD motif motif is present at residues Asp-81–Asp-85. (2E,6E)-farnesyl diphosphate-binding residues include Arg-306 and Tyr-307.

It belongs to the terpene synthase family. Requires Mg(2+) as cofactor.

The catalysed reaction is (2E,6E)-farnesyl diphosphate = Delta(6)-protoilludene + diphosphate. In terms of biological role, delta(6)-protoilludene synthase, part of the gene cluster that mediates the biosynthesis of melleolides, a range of antifungal and phytotoxic polyketide derivatives composed of an orsellinic acid (OA) moiety esterified to various sesquiterpene alcohols. The first step in melleolides biosynthesis is performed by the delta(6)-protoilludene synthase PRO1 which catalyzes the cyclization of farnesyl diphosphate to protoilludene. The orsellinic acid synthase armB produces OA by condensing acetyl-CoA with 3 malonyl-CoA units in a three-round chain elongation reaction folowed by a C2-C7 ring closure. ArmB further catalyzes the trans-esterification of OA to the various sesquiterpene alcohols resulting from the hydroxylation of protoilludene. The melleolides cluster also includes 5 cytochrome P450 monooxygenases, 4 NAD(+)-dependent oxidoreductases, one flavin-dependent oxidoreductase, and one O-methyltransferase. The cytochrome P450 monooxygenases may be involved in protoilludene hydroxylation to elaborate melleolides with multiple alcohol groups, such as melleolide D, which carries alcohol functionalities at C-4, C-5, C-10, and C-13. The role of the NAD(+)-dependent enzymes remains unknown. Numerous melleolides, including arnamial, show 5'-O-methylation of the aromatic moiety which may be catalyzed by the methyltransferase encoded in the cluster. The flavin-dependent oxidoreductase might represent the dehydrogenase yielding the aldehyde in position 1 of arnamial and other melleolides. Finally, several halogenases, localized outside of the cluster, are able to catalyze the transfer of a single chlorine atom to the melleolide backbone, resulting in a 6'-chloromelleolide product. This chain is Delta(6)-protoilludene synthase, found in Armillaria ostoyae (Armillaria root rot fungus).